The following is a 372-amino-acid chain: NAD(P)H-quinone oxidoreductase subunit 1 (372 aa).

Helical transmembrane passes span 27 to 47 (LLWL…GVLV), 65 to 85 (PEYI…KLIF), 97 to 117 (WLFT…YIIV), 128 to 148 (LAMG…GLLM), 176 to 196 (LALA…VEIV), 204 to 224 (ILSW…IAAL), 254 to 274 (FALF…LVSV), 308 to 328 (VLGI…AILL), and 347 to 367 (FLLP…LAFP).

It belongs to the complex I subunit 1 family. In terms of assembly, NDH-1 is composed of at least 11 different subunits.

It is found in the cellular thylakoid membrane. The enzyme catalyses a plastoquinone + NADH + (n+1) H(+)(in) = a plastoquinol + NAD(+) + n H(+)(out). It catalyses the reaction a plastoquinone + NADPH + (n+1) H(+)(in) = a plastoquinol + NADP(+) + n H(+)(out). Functionally, NDH-1 shuttles electrons from an unknown electron donor, via FMN and iron-sulfur (Fe-S) centers, to quinones in the respiratory and/or the photosynthetic chain. The immediate electron acceptor for the enzyme in this species is believed to be plastoquinone. Couples the redox reaction to proton translocation, and thus conserves the redox energy in a proton gradient. This is NAD(P)H-quinone oxidoreductase subunit 1 from Thermosynechococcus vestitus (strain NIES-2133 / IAM M-273 / BP-1).